We begin with the raw amino-acid sequence, 412 residues long: Alpha-ketoglutarate-dependent sulfonate dioxygenase (412 aa).

Residue Ser52 is modified to Phosphoserine. Fe cation-binding residues include His218 and Asp220. 2-oxoglutarate contacts are provided by Thr245 and Trp352. His367 is a binding site for Fe cation. 2 residues coordinate 2-oxoglutarate: Arg379 and Arg383.

It belongs to the TfdA dioxygenase family. Fe(2+) serves as cofactor.

It participates in organosulfur degradation; alkanesulfonate degradation. Its function is as follows. Acts as an alpha-ketoglutarate-dependent dioxygenase active on sulfonates. Although taurine is a poor substrate, a variety of other sulfonates are utilized, with the best natural substrates being isethionate and taurocholate. In Saccharomyces cerevisiae (strain ATCC 204508 / S288c) (Baker's yeast), this protein is Alpha-ketoglutarate-dependent sulfonate dioxygenase (JLP1).